Reading from the N-terminus, the 496-residue chain is NADH-quinone oxidoreductase subunit N (496 aa).

14 helical membrane-spanning segments follow: residues 8-28 (LLST…VGLI), 37-57 (MFPL…YDFF), 73-93 (QFAG…VLST), 110-130 (LLLL…LLTM), 131-151 (YVGL…HPND), 162-182 (LVLG…IYGL), 203-223 (TILA…LVPF), 235-255 (PAPI…AALV), 271-291 (GLIL…LMAF), 300-320 (MAYS…AVSI), 341-361 (GVLF…AVIT), 386-406 (AAVL…AGFV), 421-441 (VWIA…YLSI), and 464-484 (FGMI…TPLA).

This sequence belongs to the complex I subunit 2 family. As to quaternary structure, NDH-1 is composed of 14 different subunits. Subunits NuoA, H, J, K, L, M, N constitute the membrane sector of the complex.

The protein resides in the cell membrane. It carries out the reaction a quinone + NADH + 5 H(+)(in) = a quinol + NAD(+) + 4 H(+)(out). Its function is as follows. NDH-1 shuttles electrons from NADH, via FMN and iron-sulfur (Fe-S) centers, to quinones in the respiratory chain. The immediate electron acceptor for the enzyme in this species is believed to be a menaquinone. Couples the redox reaction to proton translocation (for every two electrons transferred, four hydrogen ions are translocated across the cytoplasmic membrane), and thus conserves the redox energy in a proton gradient. The protein is NADH-quinone oxidoreductase subunit N of Desulfitobacterium hafniense (strain DSM 10664 / DCB-2).